We begin with the raw amino-acid sequence, 439 residues long: Ribosomal protein uS12 methylthiotransferase RimO (439 aa).

The region spanning 3-118 is the MTTase N-terminal domain; it reads KKFYITTLGC…AGKILREKFP (116 aa). [4Fe-4S] cluster is bound by residues cysteine 12, cysteine 48, cysteine 81, cysteine 157, cysteine 161, and cysteine 164. The region spanning 143–370 is the Radical SAM core domain; sequence NYSKPYAYVK…RDVHLAILEE (228 aa). The TRAM domain maps to 373-438; that stretch reads ESRIGQTYDA…EYDMNGTWIS (66 aa).

This sequence belongs to the methylthiotransferase family. RimO subfamily. Requires [4Fe-4S] cluster as cofactor.

The protein resides in the cytoplasm. The enzyme catalyses L-aspartate(89)-[ribosomal protein uS12]-hydrogen + (sulfur carrier)-SH + AH2 + 2 S-adenosyl-L-methionine = 3-methylsulfanyl-L-aspartate(89)-[ribosomal protein uS12]-hydrogen + (sulfur carrier)-H + 5'-deoxyadenosine + L-methionine + A + S-adenosyl-L-homocysteine + 2 H(+). Its function is as follows. Catalyzes the methylthiolation of an aspartic acid residue of ribosomal protein uS12. The chain is Ribosomal protein uS12 methylthiotransferase RimO from Leptospira borgpetersenii serovar Hardjo-bovis (strain L550).